The sequence spans 684 residues: 1,4-alpha-glucan-branching enzyme (684 aa).

Positions 88 and 123 each coordinate (1,4-alpha-D-glucosyl)n. Aspartate 340 acts as the Nucleophile in catalysis. Glutamate 395 (proton donor) is an active-site residue.

It belongs to the glycosyl hydrolase 13 family. GlgB subfamily.

The protein localises to the cytoplasm. The catalysed reaction is Transfers a segment of a (1-&gt;4)-alpha-D-glucan chain to a primary hydroxy group in a similar glucan chain.. The protein operates within glycan biosynthesis; glycogen biosynthesis. In terms of biological role, glycogen-branching enzyme participates in the glycogen biosynthetic process along with glycogenin and glycogen synthase. Generates alpha-1,6-glucosidic branches from alpha-1,4-linked glucose chains, to increase solubility of the glycogen polymer. The polypeptide is 1,4-alpha-glucan-branching enzyme (be1) (Emericella nidulans (strain FGSC A4 / ATCC 38163 / CBS 112.46 / NRRL 194 / M139) (Aspergillus nidulans)).